A 382-amino-acid polypeptide reads, in one-letter code: Mannitol-1-phosphate 5-dehydrogenase (382 aa).

3 to 14 (AVHFGAGNIGRG) contacts NAD(+).

Belongs to the mannitol dehydrogenase family.

It catalyses the reaction D-mannitol 1-phosphate + NAD(+) = beta-D-fructose 6-phosphate + NADH + H(+). The polypeptide is Mannitol-1-phosphate 5-dehydrogenase (mtlD) (Geobacillus stearothermophilus (Bacillus stearothermophilus)).